The sequence spans 408 residues: ATP phosphoribosyltransferase regulatory subunit (408 aa).

Belongs to the class-II aminoacyl-tRNA synthetase family. HisZ subfamily. Heteromultimer composed of HisG and HisZ subunits.

Its subcellular location is the cytoplasm. It participates in amino-acid biosynthesis; L-histidine biosynthesis; L-histidine from 5-phospho-alpha-D-ribose 1-diphosphate: step 1/9. Its function is as follows. Required for the first step of histidine biosynthesis. May allow the feedback regulation of ATP phosphoribosyltransferase activity by histidine. This Thermosynechococcus vestitus (strain NIES-2133 / IAM M-273 / BP-1) protein is ATP phosphoribosyltransferase regulatory subunit.